The sequence spans 132 residues: Small ribosomal subunit protein uS11 (132 aa).

This sequence belongs to the universal ribosomal protein uS11 family. As to quaternary structure, part of the 30S ribosomal subunit.

Located on the platform of the 30S subunit. The chain is Small ribosomal subunit protein uS11 from Saccharolobus solfataricus (strain ATCC 35092 / DSM 1617 / JCM 11322 / P2) (Sulfolobus solfataricus).